We begin with the raw amino-acid sequence, 129 residues long: Lysozyme C-3 (129 aa).

The region spanning 1–129 (KVYERCELAA…VSRWIRGCRL (129 aa)) is the C-type lysozyme domain. 4 cysteine pairs are disulfide-bonded: C6/C127, C30/C115, C64/C80, and C76/C94. Catalysis depends on residues E35 and D52.

This sequence belongs to the glycosyl hydrolase 22 family.

Its subcellular location is the secreted. The enzyme catalyses Hydrolysis of (1-&gt;4)-beta-linkages between N-acetylmuramic acid and N-acetyl-D-glucosamine residues in a peptidoglycan and between N-acetyl-D-glucosamine residues in chitodextrins.. Lysozymes have primarily a bacteriolytic function; those in tissues and body fluids are associated with the monocyte-macrophage system and enhance the activity of immunoagents. The polypeptide is Lysozyme C-3 (Anas platyrhynchos (Mallard)).